A 215-amino-acid chain; its full sequence is Thymidylate kinase (215 aa).

ATP is bound at residue 13-20 (GLEGAGKS).

It belongs to the thymidylate kinase family.

It carries out the reaction dTMP + ATP = dTDP + ADP. Functionally, phosphorylation of dTMP to form dTDP in both de novo and salvage pathways of dTTP synthesis. This chain is Thymidylate kinase, found in Shewanella frigidimarina (strain NCIMB 400).